The chain runs to 310 residues: tRNA pseudouridine synthase B (310 aa).

Aspartate 37 (nucleophile) is an active-site residue.

The protein belongs to the pseudouridine synthase TruB family. Type 1 subfamily.

It catalyses the reaction uridine(55) in tRNA = pseudouridine(55) in tRNA. Functionally, responsible for synthesis of pseudouridine from uracil-55 in the psi GC loop of transfer RNAs. This chain is tRNA pseudouridine synthase B, found in Deinococcus deserti (strain DSM 17065 / CIP 109153 / LMG 22923 / VCD115).